Reading from the N-terminus, the 594-residue chain is MTLDKLRKKYIDFFKSKKHFEIMGKSLVPENDPTVLFNTAGMQPLIPYLLGEVHPSGDMLVNVQKCLRTGDIDEVGDLSHLTFFEMLGNWSLGAYFKEYSVKCSFEFLTSSDYLNIPKDSLYVSVFEGDQKIPCDTETAKVWESLGIPKDRIYYLSKAHNFWGPVGSKGPCGPDTEIYVDTGKIKCSLDCNITCSCGKYFEIWNNVFMQYNKDENGNYIELDRKCVDTGMGLERTIAFLQGKSSVYDTDAFIPIIKRIEVISGKIYGQKEDDDRCIRIISDHVKAACFILADSSVVSPSNLGQGYVLRRLIRRSIRYAKKLGIKSHFLADLVDSIETIYGSFYNELTEKKDFIKKELSTEEEKFFKTLFQGEQEFIKITRNLPSKTIPGDIAFKLYDTYGFPYEVTEELAFEYGFNIDKVGFDEYFKKHQKTSKKGGDKVFKGGLADYTYETTRLHTATHLLHKALQLVLGDHVRQKGSNITAERLRFDFVHSEKMTDDEIKKVEEIVNLQIKNSLSVKKSIMELSEAQKKGAMALFGEKYDNLVSVYEIDGFSLEVCGGPHVENTNELGTFKIQKEQSSSSGIRRIKAILIDK.

Residues His456, His460, Cys558, and His562 each contribute to the Zn(2+) site.

Belongs to the class-II aminoacyl-tRNA synthetase family. It depends on Zn(2+) as a cofactor.

It is found in the cytoplasm. The enzyme catalyses tRNA(Ala) + L-alanine + ATP = L-alanyl-tRNA(Ala) + AMP + diphosphate. Functionally, catalyzes the attachment of alanine to tRNA(Ala) in a two-step reaction: alanine is first activated by ATP to form Ala-AMP and then transferred to the acceptor end of tRNA(Ala). Also edits incorrectly charged Ser-tRNA(Ala) and Gly-tRNA(Ala) via its editing domain. The protein is Alanine--tRNA ligase (alaS) of Borrelia garinii subsp. bavariensis (strain ATCC BAA-2496 / DSM 23469 / PBi) (Borreliella bavariensis).